The chain runs to 709 residues: DNA topoisomerase 1 (709 aa).

Residues 3–127 form the Toprim domain; that stretch reads KNLVVIESPN…KCKRITFNEI (125 aa). The Mg(2+) site is built by Glu-9 and Asp-95. Residues 143 to 598 form the Topo IA-type catalytic domain; it reads DLNWVESQFA…FWTNFKSDVK (456 aa). Positions 176–181 are interaction with DNA; the sequence is SAGRVQ. The active-site O-(5'-phospho-DNA)-tyrosine intermediate is Tyr-334. 2 consecutive C4-type zinc fingers follow at residues 618-646 and 667-696; these read CPKC…FPKC and CPEC…FPNC.

Belongs to the type IA topoisomerase family. As to quaternary structure, monomer. It depends on Mg(2+) as a cofactor.

The enzyme catalyses ATP-independent breakage of single-stranded DNA, followed by passage and rejoining.. Releases the supercoiling and torsional tension of DNA, which is introduced during the DNA replication and transcription, by transiently cleaving and rejoining one strand of the DNA duplex. Introduces a single-strand break via transesterification at a target site in duplex DNA. The scissile phosphodiester is attacked by the catalytic tyrosine of the enzyme, resulting in the formation of a DNA-(5'-phosphotyrosyl)-enzyme intermediate and the expulsion of a 3'-OH DNA strand. The free DNA strand then undergoes passage around the unbroken strand, thus removing DNA supercoils. Finally, in the religation step, the DNA 3'-OH attacks the covalent intermediate to expel the active-site tyrosine and restore the DNA phosphodiester backbone. This chain is DNA topoisomerase 1, found in Mycoplasma genitalium (strain ATCC 33530 / DSM 19775 / NCTC 10195 / G37) (Mycoplasmoides genitalium).